The sequence spans 217 residues: FMN-dependent NADH:quinone oxidoreductase (217 aa).

FMN contacts are provided by residues Ser10 and 16–18 (SVS).

The protein belongs to the azoreductase type 1 family. In terms of assembly, homodimer. It depends on FMN as a cofactor.

It carries out the reaction 2 a quinone + NADH + H(+) = 2 a 1,4-benzosemiquinone + NAD(+). The catalysed reaction is N,N-dimethyl-1,4-phenylenediamine + anthranilate + 2 NAD(+) = 2-(4-dimethylaminophenyl)diazenylbenzoate + 2 NADH + 2 H(+). Functionally, quinone reductase that provides resistance to thiol-specific stress caused by electrophilic quinones. Also exhibits azoreductase activity. Catalyzes the reductive cleavage of the azo bond in aromatic azo compounds to the corresponding amines. This Polaromonas naphthalenivorans (strain CJ2) protein is FMN-dependent NADH:quinone oxidoreductase.